The sequence spans 448 residues: Phosphoglucosamine mutase (448 aa).

Catalysis depends on serine 100, which acts as the Phosphoserine intermediate. Mg(2+) contacts are provided by serine 100, aspartate 240, aspartate 242, and aspartate 244. Phosphoserine is present on serine 100.

Belongs to the phosphohexose mutase family. Mg(2+) is required as a cofactor. In terms of processing, activated by phosphorylation.

It catalyses the reaction alpha-D-glucosamine 1-phosphate = D-glucosamine 6-phosphate. In terms of biological role, catalyzes the conversion of glucosamine-6-phosphate to glucosamine-1-phosphate. This chain is Phosphoglucosamine mutase, found in Bacillus licheniformis (strain ATCC 14580 / DSM 13 / JCM 2505 / CCUG 7422 / NBRC 12200 / NCIMB 9375 / NCTC 10341 / NRRL NRS-1264 / Gibson 46).